The chain runs to 117 residues: Fluoride-specific ion channel FluC 2 (117 aa).

Helical transmembrane passes span 1–21 (MISI…RSAI) and 46–66 (FLIG…AFFV). Na(+)-binding residues include Gly71 and Thr74. A helical membrane pass occupies residues 95–115 (LFLNYSLLQFIIGFIACYIGY).

This sequence belongs to the fluoride channel Fluc/FEX (TC 1.A.43) family.

It is found in the cell membrane. The enzyme catalyses fluoride(in) = fluoride(out). Its activity is regulated as follows. Na(+) is not transported, but it plays an essential structural role and its presence is essential for fluoride channel function. In terms of biological role, fluoride-specific ion channel. Important for reducing fluoride concentration in the cell, thus reducing its toxicity. The chain is Fluoride-specific ion channel FluC 2 from Staphylococcus aureus (strain MRSA252).